Reading from the N-terminus, the 96-residue chain is Iron-sulfur cluster assembly protein CyaY (96 aa).

Belongs to the frataxin family.

Its function is as follows. Involved in iron-sulfur (Fe-S) cluster assembly. May act as a regulator of Fe-S biogenesis. The protein is Iron-sulfur cluster assembly protein CyaY of Rickettsia bellii (strain RML369-C).